We begin with the raw amino-acid sequence, 566 residues long: MVEGDSYVETLDSMIELFKDYKPGSITLENITRLCQTLGLESFTEELSNELSRLSTASKIIVIDVDYNKKQDRIQDVKLVLASNFDNFDYFNQRDGEHEKSNILLNSLTKYPDLKAFHNNLKFLYLLDAYSHIESDSTSHNNGSSDKSLDSSNASFNNQGKLDLFKYFTELSHYIRQCFQDNCCDFKVRTNLNDKFGIYILTQGINGKEVPLAKIYLEENKSDSQYRFYEYIYSQETKSWINESAENFSNGISLVMEIVANAKESNYTDLIWFPEDFISPELIIDKVTCSSNSSSSPPIIDLFSNNNYNSRIQLMNDFTTKLINIKKFDISNDNLDLISEILKWVQWSRIVLQNVFKLVSTPSSNSNSSELEPDYQAPFSTSTKDKNSSTSNTEPIPRSNRHGSVVEASRRRRSSTNKSKRPSITEAMMLKEEGLQQFNLHEILSEPAIEEENGDSIKEHSTTMDGANDLGFTASVSNQENAGTDIVMEDHGVLQGTSQNYGTATADDADIEMKDVSSKPSKPESSVLQLIVSEDHIILDTISECNLYDDVKCWSKFIEKFQDIVS.

S155 carries the phosphoserine modification. The tract at residues 361 to 425 (TPSSNSNSSE…TNKSKRPSIT (65 aa)) is disordered. Residues 410 to 421 (RRRRSSTNKSKR) are compositionally biased toward basic residues. S423 bears the Phosphoserine mark.

It belongs to the Mediator complex subunit 1 family. Component of the Mediator complex, which is composed of at least 21 subunits that form three structurally distinct submodules. The Mediator head module contains MED6, MED8, MED11, SRB4/MED17, SRB5/MED18, ROX3/MED19, SRB2/MED20 and SRB6/MED22, the middle module contains MED1, MED4, NUT1/MED5, MED7, CSE2/MED9, NUT2/MED10, SRB7/MED21 and SOH1/MED31, and the tail module contains MED2, PGD1/MED3, RGR1/MED14, GAL11/MED15 and SIN4/MED16. The head and the middle modules interact directly with RNA polymerase II, whereas the elongated tail module interacts with gene-specific regulatory proteins. MED1 interacts directly with MED4 and MED7.

It localises to the nucleus. In terms of biological role, component of the Mediator complex, a coactivator involved in the regulated transcription of nearly all RNA polymerase II-dependent genes. Mediator functions as a bridge to convey information from gene-specific regulatory proteins to the basal RNA polymerase II transcription machinery. The Mediator complex, having a compact conformation in its free form, is recruited to promoters by direct interactions with regulatory proteins and serves for the assembly of a functional preinitiation complex with RNA polymerase II and the general transcription factors. The Mediator complex unfolds to an extended conformation and partially surrounds RNA polymerase II, specifically interacting with the unphosphorylated form of the C-terminal domain (CTD) of RNA polymerase II. The Mediator complex dissociates from the RNA polymerase II holoenzyme and stays at the promoter when transcriptional elongation begins. The polypeptide is Mediator of RNA polymerase II transcription subunit 1 (MED1) (Saccharomyces cerevisiae (strain ATCC 204508 / S288c) (Baker's yeast)).